A 372-amino-acid chain; its full sequence is Ribosomal RNA small subunit methyltransferase H (372 aa).

S-adenosyl-L-methionine contacts are provided by residues 44-46 (GGH), D63, L97, D111, and Q118. Basic and acidic residues predominate over residues 315–334 (RAAERLDPTAEQRRRTDRER). The segment at 315–372 (RAAERLDPTAEQRRRTDRERYRRRVRAMHQPGTGSAVRRPTPGDDGTGTDEEGEGHDS) is disordered. Positions 361–372 (TGTDEEGEGHDS) are enriched in acidic residues.

This sequence belongs to the methyltransferase superfamily. RsmH family.

It is found in the cytoplasm. The enzyme catalyses cytidine(1402) in 16S rRNA + S-adenosyl-L-methionine = N(4)-methylcytidine(1402) in 16S rRNA + S-adenosyl-L-homocysteine + H(+). Functionally, specifically methylates the N4 position of cytidine in position 1402 (C1402) of 16S rRNA. In Salinispora arenicola (strain CNS-205), this protein is Ribosomal RNA small subunit methyltransferase H.